We begin with the raw amino-acid sequence, 167 residues long: uncharacterized protein (167 aa).

Residues 1 to 10 (MPLRRCRAWR) show a composition bias toward basic residues. A disordered region spans residues 1–23 (MPLRRCRAWRGHSQPGTGSRSNE).

This is an uncharacterized protein from Sinorhizobium fredii (strain NBRC 101917 / NGR234).